A 467-amino-acid polypeptide reads, in one-letter code: Uronate isomerase (467 aa).

This sequence belongs to the metallo-dependent hydrolases superfamily. Uronate isomerase family.

It catalyses the reaction D-glucuronate = D-fructuronate. The enzyme catalyses aldehydo-D-galacturonate = keto-D-tagaturonate. It participates in carbohydrate metabolism; pentose and glucuronate interconversion. The sequence is that of Uronate isomerase from Clostridium acetobutylicum (strain ATCC 824 / DSM 792 / JCM 1419 / IAM 19013 / LMG 5710 / NBRC 13948 / NRRL B-527 / VKM B-1787 / 2291 / W).